The chain runs to 379 residues: Queuine tRNA-ribosyltransferase (379 aa).

Asp94 serves as the catalytic Proton acceptor. Residues 94 to 98 (DSGGF), Asp148, Gln191, and Gly218 contribute to the substrate site. The tract at residues 249-255 (GVGSPDA) is RNA binding. Asp268 (nucleophile) is an active-site residue. Residues 273 to 277 (TRIAR) are RNA binding; important for wobble base 34 recognition. The Zn(2+) site is built by Cys306, Cys308, Cys311, and His337.

This sequence belongs to the queuine tRNA-ribosyltransferase family. As to quaternary structure, homodimer. Within each dimer, one monomer is responsible for RNA recognition and catalysis, while the other monomer binds to the replacement base PreQ1. The cofactor is Zn(2+).

It carries out the reaction 7-aminomethyl-7-carbaguanine + guanosine(34) in tRNA = 7-aminomethyl-7-carbaguanosine(34) in tRNA + guanine. The protein operates within tRNA modification; tRNA-queuosine biosynthesis. Its function is as follows. Catalyzes the base-exchange of a guanine (G) residue with the queuine precursor 7-aminomethyl-7-deazaguanine (PreQ1) at position 34 (anticodon wobble position) in tRNAs with GU(N) anticodons (tRNA-Asp, -Asn, -His and -Tyr). Catalysis occurs through a double-displacement mechanism. The nucleophile active site attacks the C1' of nucleotide 34 to detach the guanine base from the RNA, forming a covalent enzyme-RNA intermediate. The proton acceptor active site deprotonates the incoming PreQ1, allowing a nucleophilic attack on the C1' of the ribose to form the product. After dissociation, two additional enzymatic reactions on the tRNA convert PreQ1 to queuine (Q), resulting in the hypermodified nucleoside queuosine (7-(((4,5-cis-dihydroxy-2-cyclopenten-1-yl)amino)methyl)-7-deazaguanosine). The polypeptide is Queuine tRNA-ribosyltransferase (Staphylococcus aureus (strain bovine RF122 / ET3-1)).